The sequence spans 479 residues: Sulfate adenylyltransferase subunit 1 (479 aa).

Positions 25 to 239 (KSLLRFLTCG…EVLETVDIQR (215 aa)) constitute a tr-type G domain. A G1 region spans residues 34–41 (GSVDDGKS). 34 to 41 (GSVDDGKS) contacts GTP. Positions 92 to 96 (GITID) are G2. Residues 113 to 116 (DTPG) are G3. GTP contacts are provided by residues 113–117 (DTPGH) and 168–171 (NKMD). A G4 region spans residues 168–171 (NKMD). Residues 206–208 (SAL) form a G5 region.

The protein belongs to the TRAFAC class translation factor GTPase superfamily. Classic translation factor GTPase family. CysN/NodQ subfamily. Heterodimer composed of CysD, the smaller subunit, and CysN.

It catalyses the reaction sulfate + ATP + H(+) = adenosine 5'-phosphosulfate + diphosphate. Its pathway is sulfur metabolism; hydrogen sulfide biosynthesis; sulfite from sulfate: step 1/3. With CysD forms the ATP sulfurylase (ATPS) that catalyzes the adenylation of sulfate producing adenosine 5'-phosphosulfate (APS) and diphosphate, the first enzymatic step in sulfur assimilation pathway. APS synthesis involves the formation of a high-energy phosphoric-sulfuric acid anhydride bond driven by GTP hydrolysis by CysN coupled to ATP hydrolysis by CysD. This Salmonella newport (strain SL254) protein is Sulfate adenylyltransferase subunit 1.